The sequence spans 621 residues: DnaJ homolog subfamily C member 2 (621 aa).

Met-1 is modified (N-acetylmethionine). An epitope (recognized by CD8(+) cytotoxic T-lymphocytes) region spans residues 23–31 (STLCQVEPV). Residues Ser-47, Ser-49, Ser-60, and Ser-63 each carry the phosphoserine modification. Residues 88–161 (DHYAVLGLGH…VKRRAFNSVD (74 aa)) form the J domain. Positions 160–250 (VDPTFDNSVP…RDERRWIEKQ (91 aa)) are ZRF1-UBD. 2 disordered regions span residues 294-315 (EKKA…QRQA) and 426-453 (KEEA…GSKN). SANT domains are found at residues 449–511 (NGSK…KLDP) and 549–604 (TDFT…EMVK).

Component of ribosome-associated complex (RAC), a heterodimer composed of Hsp70/DnaK-type chaperone HSPA14 and Hsp40/DnaJ-type chaperone DNAJC2. Interacts (via ZRF1-UBD region) with ID1. Phosphorylated in M (mitotic) phase. Widely expressed.

The protein resides in the nucleus. Its subcellular location is the cytoplasm. It is found in the cytosol. Acts both as a chaperone in the cytosol and as a chromatin regulator in the nucleus. When cytosolic, acts as a molecular chaperone: component of the ribosome-associated complex (RAC), a complex involved in folding or maintaining nascent polypeptides in a folding-competent state. In the RAC complex, stimulates the ATPase activity of the ribosome-associated pool of Hsp70-type chaperones HSPA14 that bind to the nascent polypeptide chain. When nuclear, mediates the switching from polycomb-repressed genes to an active state: specifically recruited at histone H2A ubiquitinated at 'Lys-119' (H2AK119ub), and promotes the displacement of the polycomb PRC1 complex from chromatin, thereby facilitating transcription activation. The chain is DnaJ homolog subfamily C member 2 (DNAJC2) from Homo sapiens (Human).